A 71-amino-acid polypeptide reads, in one-letter code: uncharacterized protein (71 aa).

The region spanning 15 to 71 is the Sm domain; sequence PNFEYARRLNGKKVKIFLRNGEVLDAEVTGVSNYEIMVKVGDRNLLVFKHAIDYIEY.

This is an uncharacterized protein from Methanocaldococcus jannaschii (strain ATCC 43067 / DSM 2661 / JAL-1 / JCM 10045 / NBRC 100440) (Methanococcus jannaschii).